A 68-amino-acid polypeptide reads, in one-letter code: Gallinacin-10 (68 aa).

The signal sequence occupies residues 1–19 (MKILCLLFAVLLFLFQAAP). A propeptide spanning residues 20–25 (GSADPL) is cleaved from the precursor. Cystine bridges form between C32–C61, C39–C54, and C44–C62.

The protein belongs to the beta-defensin family. In terms of tissue distribution, strong expression in the testis, liver, gall bladder and kidney. Also expressed in the ovary and male and female reproductive tracts. Expressed in the ovarian stroma and the theca and granulosa layers of the ovarian follicle.

The protein localises to the secreted. It localises to the cytoplasmic granule. Functionally, has bactericidal activity. The sequence is that of Gallinacin-10 (GAL10) from Gallus gallus (Chicken).